Consider the following 419-residue polypeptide: Creatine kinase S-type, mitochondrial (419 aa).

The transit peptide at 1–39 (MAGTFGRLLAGRVTAALFAAAGSGVLTTGYLLNQQNVKA) directs the protein to the mitochondrion. A Phosphagen kinase N-terminal domain is found at 46–132 (KLFPPSADYP…FDPVIKARHN (87 aa)). Residues 159–401 (YVLSSRVRTG…NYLVDCEKKL (243 aa)) enclose the Phosphagen kinase C-terminal domain. ATP contacts are provided by residues 162–166 (SSRVR), histidine 225, arginine 270, arginine 326, 354–359 (RGTGGV), and aspartate 369.

This sequence belongs to the ATP:guanido phosphotransferase family. Exists as an octamer composed of four MTCK homodimers. Expressed in the leg muscle and heart.

The protein localises to the mitochondrion inner membrane. The catalysed reaction is creatine + ATP = N-phosphocreatine + ADP + H(+). In terms of biological role, reversibly catalyzes the transfer of phosphate between ATP and various phosphogens (e.g. creatine phosphate). Creatine kinase isoenzymes play a central role in energy transduction in tissues with large, fluctuating energy demands, such as skeletal muscle, heart, brain and spermatozoa. This is Creatine kinase S-type, mitochondrial (CKMT2) from Gallus gallus (Chicken).